We begin with the raw amino-acid sequence, 51 residues long: Large ribosomal subunit protein eL39 (51 aa).

This sequence belongs to the eukaryotic ribosomal protein eL39 family.

The protein is Large ribosomal subunit protein eL39 of Methanosarcina acetivorans (strain ATCC 35395 / DSM 2834 / JCM 12185 / C2A).